A 338-amino-acid polypeptide reads, in one-letter code: Glycerol-3-phosphate dehydrogenase [NAD(P)+] (338 aa).

NADPH is bound by residues Trp-11, Arg-30, and Lys-109. Sn-glycerol 3-phosphate contacts are provided by Lys-109, Gly-143, and Ser-145. Residue Ala-147 coordinates NADPH. 5 residues coordinate sn-glycerol 3-phosphate: Lys-198, Asp-251, Ser-261, Arg-262, and Asn-263. The active-site Proton acceptor is the Lys-198. NADPH is bound at residue Arg-262. NADPH-binding residues include Val-286 and Glu-288.

It belongs to the NAD-dependent glycerol-3-phosphate dehydrogenase family.

Its subcellular location is the cytoplasm. It carries out the reaction sn-glycerol 3-phosphate + NAD(+) = dihydroxyacetone phosphate + NADH + H(+). The enzyme catalyses sn-glycerol 3-phosphate + NADP(+) = dihydroxyacetone phosphate + NADPH + H(+). It functions in the pathway membrane lipid metabolism; glycerophospholipid metabolism. Catalyzes the reduction of the glycolytic intermediate dihydroxyacetone phosphate (DHAP) to sn-glycerol 3-phosphate (G3P), the key precursor for phospholipid synthesis. This is Glycerol-3-phosphate dehydrogenase [NAD(P)+] from Cupriavidus taiwanensis (strain DSM 17343 / BCRC 17206 / CCUG 44338 / CIP 107171 / LMG 19424 / R1) (Ralstonia taiwanensis (strain LMG 19424)).